Here is a 71-residue protein sequence, read N- to C-terminus: Large ribosomal subunit protein bL31 (71 aa).

Positions 16, 18, 37, and 40 each coordinate Zn(2+).

This sequence belongs to the bacterial ribosomal protein bL31 family. Type A subfamily. Part of the 50S ribosomal subunit. Zn(2+) serves as cofactor.

Binds the 23S rRNA. In Chromohalobacter salexigens (strain ATCC BAA-138 / DSM 3043 / CIP 106854 / NCIMB 13768 / 1H11), this protein is Large ribosomal subunit protein bL31.